A 707-amino-acid chain; its full sequence is Polyribonucleotide nucleotidyltransferase (707 aa).

The Mg(2+) site is built by aspartate 487 and aspartate 493. One can recognise a KH domain in the interval 554–613 (PKILTMNINPDKIRDVIGPSGKQINKIIEDTGVKIDIEQDGTIFISSTDESSNQKAKKII). One can recognise an S1 motif domain in the interval 623-691 (GQLYLGKVKR…KQGRVNLSRK (69 aa)).

Belongs to the polyribonucleotide nucleotidyltransferase family. Requires Mg(2+) as cofactor.

It localises to the cytoplasm. It carries out the reaction RNA(n+1) + phosphate = RNA(n) + a ribonucleoside 5'-diphosphate. Its function is as follows. Involved in mRNA degradation. Catalyzes the phosphorolysis of single-stranded polyribonucleotides processively in the 3'- to 5'-direction. This is Polyribonucleotide nucleotidyltransferase from Bacillus velezensis (strain DSM 23117 / BGSC 10A6 / LMG 26770 / FZB42) (Bacillus amyloliquefaciens subsp. plantarum).